The primary structure comprises 234 residues: Triosephosphate isomerase (234 aa).

Residue 8-10 (NFK) participates in substrate binding. The active-site Electrophile is the His-90. The active-site Proton acceptor is the Glu-159. Residues Gly-165 and Ser-197 each coordinate substrate.

Belongs to the triosephosphate isomerase family. Homodimer.

Its subcellular location is the cytoplasm. The catalysed reaction is D-glyceraldehyde 3-phosphate = dihydroxyacetone phosphate. Its pathway is carbohydrate biosynthesis; gluconeogenesis. The protein operates within carbohydrate degradation; glycolysis; D-glyceraldehyde 3-phosphate from glycerone phosphate: step 1/1. Its function is as follows. Involved in the gluconeogenesis. Catalyzes stereospecifically the conversion of dihydroxyacetone phosphate (DHAP) to D-glyceraldehyde-3-phosphate (G3P). In Helicobacter acinonychis (strain Sheeba), this protein is Triosephosphate isomerase.